The sequence spans 199 residues: Thymidylate kinase (199 aa).

7–14 (GIDGSGKS) is a binding site for ATP.

Belongs to the thymidylate kinase family.

The enzyme catalyses dTMP + ATP = dTDP + ADP. Functionally, phosphorylation of dTMP to form dTDP in both de novo and salvage pathways of dTTP synthesis. This is Thymidylate kinase from Thermosipho melanesiensis (strain DSM 12029 / CIP 104789 / BI429).